Here is a 170-residue protein sequence, read N- to C-terminus: Ribosomal RNA small subunit methyltransferase G (170 aa).

S-adenosyl-L-methionine-binding positions include Gly-70, Leu-75, 120–121 (AE), and Arg-138.

This sequence belongs to the methyltransferase superfamily. RNA methyltransferase RsmG family.

It is found in the cytoplasm. In terms of biological role, specifically methylates the N7 position of guanine in position 518 of 16S rRNA. This Mycobacterium ulcerans (strain Agy99) protein is Ribosomal RNA small subunit methyltransferase G.